An 84-amino-acid chain; its full sequence is RNA-binding protein Hfq (84 aa).

Residues 10–70 (DNVLNQVRKN…VSTIIPGKTL (61 aa)) enclose the Sm domain.

It belongs to the Hfq family. Homohexamer.

Its function is as follows. RNA chaperone that binds small regulatory RNA (sRNAs) and mRNAs to facilitate mRNA translational regulation in response to envelope stress, environmental stress and changes in metabolite concentrations. Also binds with high specificity to tRNAs. The protein is RNA-binding protein Hfq of Natranaerobius thermophilus (strain ATCC BAA-1301 / DSM 18059 / JW/NM-WN-LF).